A 277-amino-acid chain; its full sequence is Large ribosomal subunit protein uL2 (277 aa).

2 disordered regions span residues 1–55 (MGIR…RHQG) and 217–277 (KRPS…KKKR). Residues 37 to 55 (LHSKGGRNGHGRITARHQG) show a composition bias toward basic residues.

Belongs to the universal ribosomal protein uL2 family. In terms of assembly, part of the 50S ribosomal subunit. Forms a bridge to the 30S subunit in the 70S ribosome.

One of the primary rRNA binding proteins. Required for association of the 30S and 50S subunits to form the 70S ribosome, for tRNA binding and peptide bond formation. It has been suggested to have peptidyltransferase activity; this is somewhat controversial. Makes several contacts with the 16S rRNA in the 70S ribosome. The chain is Large ribosomal subunit protein uL2 from Thermobifida fusca (strain YX).